The chain runs to 379 residues: Succinyl-diaminopimelate desuccinylase (379 aa).

His-70 is a binding site for Zn(2+). The active site involves Asp-72. Asp-103 provides a ligand contact to Zn(2+). Glu-137 functions as the Proton acceptor in the catalytic mechanism. 3 residues coordinate Zn(2+): Glu-138, Glu-166, and His-352.

This sequence belongs to the peptidase M20A family. DapE subfamily. Homodimer. Zn(2+) is required as a cofactor. Requires Co(2+) as cofactor.

The catalysed reaction is N-succinyl-(2S,6S)-2,6-diaminopimelate + H2O = (2S,6S)-2,6-diaminopimelate + succinate. It functions in the pathway amino-acid biosynthesis; L-lysine biosynthesis via DAP pathway; LL-2,6-diaminopimelate from (S)-tetrahydrodipicolinate (succinylase route): step 3/3. In terms of biological role, catalyzes the hydrolysis of N-succinyl-L,L-diaminopimelic acid (SDAP), forming succinate and LL-2,6-diaminopimelate (DAP), an intermediate involved in the bacterial biosynthesis of lysine and meso-diaminopimelic acid, an essential component of bacterial cell walls. The polypeptide is Succinyl-diaminopimelate desuccinylase (Burkholderia mallei (strain NCTC 10247)).